We begin with the raw amino-acid sequence, 148 residues long: Ubiquitin-conjugating enzyme E2-16 kDa (148 aa).

Residues 2-148 (SSSKRIAKEL…AKEWTKKYAV (147 aa)) form the UBC core domain. S12 carries the phosphoserine modification. C86 functions as the Glycyl thioester intermediate in the catalytic mechanism. K91 participates in a covalent cross-link: Glycyl lysine isopeptide (Lys-Gly) (interchain with G-Cter in ubiquitin).

The protein belongs to the ubiquitin-conjugating enzyme family. In terms of assembly, component of the RSP5-UBA1-UBC5 ubiquitin ligase complex composed of E3 RSP5, E1 UBA1 and E2 UBC5. The N-terminus is blocked.

The catalysed reaction is S-ubiquitinyl-[E1 ubiquitin-activating enzyme]-L-cysteine + [E2 ubiquitin-conjugating enzyme]-L-cysteine = [E1 ubiquitin-activating enzyme]-L-cysteine + S-ubiquitinyl-[E2 ubiquitin-conjugating enzyme]-L-cysteine.. Its pathway is protein modification; protein ubiquitination. Catalyzes the covalent attachment of ubiquitin to other proteins. Mediates the selective degradation of short-lived and abnormal proteins. The RSP5-UBA1-UBC5 ubiquitin ligase complex ubiquitinates RPO21 forming 'Lys-63'-linked polyubiquitin chains. The polypeptide is Ubiquitin-conjugating enzyme E2-16 kDa (UBC5) (Saccharomyces cerevisiae (strain ATCC 204508 / S288c) (Baker's yeast)).